The primary structure comprises 474 residues: Shufflon protein A (474 aa).

The constant region stretch occupies residues 1–361 (MKKYDRGWAS…TGAILSCQSG (361 aa)). Positions 362 to 474 (TWKTSGSLNG…GVFSVFGYQT (113 aa)) are variable region.

The polypeptide is Shufflon protein A (Escherichia coli).